A 37-amino-acid chain; its full sequence is Large ribosomal subunit protein bL36 (37 aa).

The protein belongs to the bacterial ribosomal protein bL36 family.

The protein is Large ribosomal subunit protein bL36 of Micrococcus luteus (strain ATCC 4698 / DSM 20030 / JCM 1464 / CCM 169 / CCUG 5858 / IAM 1056 / NBRC 3333 / NCIMB 9278 / NCTC 2665 / VKM Ac-2230) (Micrococcus lysodeikticus).